The sequence spans 238 residues: Flagellar L-ring protein (238 aa).

The signal sequence occupies residues 1–17 (MIRKTLAASCAVLLMAG). Residue Cys-18 is the site of N-palmitoyl cysteine attachment. Residue Cys-18 is the site of S-diacylglycerol cysteine attachment.

This sequence belongs to the FlgH family. The basal body constitutes a major portion of the flagellar organelle and consists of four rings (L,P,S, and M) mounted on a central rod.

It localises to the cell outer membrane. Its subcellular location is the bacterial flagellum basal body. Functionally, assembles around the rod to form the L-ring and probably protects the motor/basal body from shearing forces during rotation. The chain is Flagellar L-ring protein from Nitratidesulfovibrio vulgaris (strain ATCC 29579 / DSM 644 / CCUG 34227 / NCIMB 8303 / VKM B-1760 / Hildenborough) (Desulfovibrio vulgaris).